The primary structure comprises 307 residues: Transmembrane protein 200B (307 aa).

The segment at 1–38 (MTAGSPEECGEVRRSPEGRVSRLGRRLGRRRRPRSPPE) is disordered. The segment covering 10 to 20 (GEVRRSPEGRV) has biased composition (basic and acidic residues). Positions 22 to 34 (RLGRRLGRRRRPR) are enriched in basic residues. Residues 53–73 (GAFAALGALVVLVGMGIAVAG) form a helical membrane-spanning segment. The segment at 81–111 (APGSRAANASSPQMSELRREGRGGGRAHGPH) is disordered. A glycan (N-linked (GlcNAc...) asparagine) is linked at N88. Residues 96–111 (ELRREGRGGGRAHGPH) are compositionally biased toward basic and acidic residues. Residues 116–136 (LLGPVIMGVGLFVFICANTLL) traverse the membrane as a helical segment. Positions 180 to 211 (AVGCAEPEIWDPSPRRGTSPVPSVRSLRSEPA) are disordered.

Belongs to the TMEM200 family.

Its subcellular location is the membrane. This chain is Transmembrane protein 200B (TMEM200B), found in Homo sapiens (Human).